The primary structure comprises 467 residues: Zinc finger and BTB domain-containing protein 43 (467 aa).

Residue M1 is modified to N-acetylmethionine. The region spanning 33–97 is the BTB domain; the sequence is CDVSIVVQGH…SYTGRLVMPA (65 aa). Disordered stretches follow at residues 134 to 153 and 162 to 225; these read LNHG…GLVE and HTDF…SAEF. 2 stretches are compositionally biased toward basic and acidic residues: residues 164–174 and 182–194; these read DFPKAQELRDG and KDEL…EHEY. Residues K182, K241, K247, K297, and K358 each participate in a glycyl lysine isopeptide (Lys-Gly) (interchain with G-Cter in SUMO2) cross-link. The C2H2-type 1; atypical zinc-finger motif lies at 373 to 394; sequence YPCQCGKSFTHKSQRDRHMSMH. Residues 400-422 form a C2H2-type 2 zinc finger; it reads YGCGVCGKKFKMKHHLVGHMKIH. The residue at position 423 (T423) is a Phosphothreonine. The C2H2-type 3; atypical zinc finger occupies 428-450; that stretch reads YECNICAKRFMWRDSFHRHVTSC. K458 participates in a covalent cross-link: Glycyl lysine isopeptide (Lys-Gly) (interchain with G-Cter in SUMO2).

It belongs to the krueppel C2H2-type zinc-finger protein family. In terms of assembly, interacts with BDP1.

Its subcellular location is the nucleus. Functionally, may be involved in transcriptional regulation. This is Zinc finger and BTB domain-containing protein 43 (ZBTB43) from Homo sapiens (Human).